The primary structure comprises 108 residues: Ig kappa chain V-V region MOPC 173 (108 aa).

Residues 1-23 are framework-1; that stretch reads DIQMTQTTSSLSASLGDRVTISC. Cysteines 23 and 88 form a disulfide. Residues 24–34 form a complementarity-determining-1 region; it reads SASQSIGNYLB. Residues 35–49 are framework-2; that stretch reads WYQQKPDGTVKLLIY. Residues 50–56 form a complementarity-determining-2 region; the sequence is YTSSLHS. The framework-3 stretch occupies residues 57 to 88; that stretch reads GVPSRFSGSGSGTDYSLTISBLZPZBIATYYC. Residues 89–97 are complementarity-determining-3; it reads QQYSKLPRT. The tract at residues 98 to 108 is framework-4; sequence FGGGTKLEIKR.

This is Ig kappa chain V-V region MOPC 173 from Mus musculus (Mouse).